A 150-amino-acid chain; its full sequence is Transthyretin (150 aa).

Residues 1 to 20 (MAFHSMLLVFLAGLVFLTEA) form the signal peptide. Cys33 carries the sulfocysteine modification. Residues Lys38, Glu77, and Ser140 each coordinate L-thyroxine.

Belongs to the transthyretin family. In terms of assembly, homotetramer. Dimer of dimers. In the homotetramer, subunits assemble around a central channel that can accommodate two ligand molecules. Interacts with RBP4. Post-translationally, sulfonation of the reactive cysteine Cys-33 enhances the stability of the native conformation of TTR, avoiding misassembly of the protein leading to amyloid formation. In terms of tissue distribution, strongly expressed in the brain, and to a lesser extent in the eye.

The protein resides in the secreted. Thyroid hormone-binding protein, with a much higher binding affinity for triiodothyronine (T3) than for thyroxine (T4). Probably transports triiodothyronine from the bloodstream to the brain. In Crocodylus porosus (Saltwater crocodile), this protein is Transthyretin (TTR).